Here is a 630-residue protein sequence, read N- to C-terminus: Biosynthetic arginine decarboxylase (630 aa).

K99 carries the post-translational modification N6-(pyridoxal phosphate)lysine. V281–Y291 provides a ligand contact to substrate.

This sequence belongs to the Orn/Lys/Arg decarboxylase class-II family. SpeA subfamily. It depends on Mg(2+) as a cofactor. The cofactor is pyridoxal 5'-phosphate.

The enzyme catalyses L-arginine + H(+) = agmatine + CO2. Its pathway is amine and polyamine biosynthesis; agmatine biosynthesis; agmatine from L-arginine: step 1/1. Catalyzes the biosynthesis of agmatine from arginine. In Bacteroides fragilis (strain ATCC 25285 / DSM 2151 / CCUG 4856 / JCM 11019 / LMG 10263 / NCTC 9343 / Onslow / VPI 2553 / EN-2), this protein is Biosynthetic arginine decarboxylase.